Reading from the N-terminus, the 269-residue chain is Ribosomal RNA small subunit methyltransferase A (269 aa).

S-adenosyl-L-methionine contacts are provided by Asn20, Leu22, Gly47, Glu68, Asp90, and Asn110.

This sequence belongs to the class I-like SAM-binding methyltransferase superfamily. rRNA adenine N(6)-methyltransferase family. RsmA subfamily.

Its subcellular location is the cytoplasm. It catalyses the reaction adenosine(1518)/adenosine(1519) in 16S rRNA + 4 S-adenosyl-L-methionine = N(6)-dimethyladenosine(1518)/N(6)-dimethyladenosine(1519) in 16S rRNA + 4 S-adenosyl-L-homocysteine + 4 H(+). Functionally, specifically dimethylates two adjacent adenosines (A1518 and A1519) in the loop of a conserved hairpin near the 3'-end of 16S rRNA in the 30S particle. May play a critical role in biogenesis of 30S subunits. This Chlorobium phaeobacteroides (strain DSM 266 / SMG 266 / 2430) protein is Ribosomal RNA small subunit methyltransferase A.